A 521-amino-acid chain; its full sequence is MDGVIESPSNNTIKISPSTSDSSTTTPIITTPPTQSTATVTTKAAATTTTTEASTTPPPPQPTPTPTQSTATVTKEVETTTETIPPIVTKGKIKKSKKSIKKPTIVKRPTTPIDYKQWHTEWPIHVYSHPINGRYLVATKDLDEQTVILRDLPYTWAVDHATCDSVCQHCFLEVPLNQQILPTDFYMCEGCQRVGYCSANCRCIDYSQHRFECQIFKELDTEEYSPFLMSEIKLLVRTLSRKWLEDSITQTAGIDINDETIKKQNTYNQYKNPQSLIPQDNGLRYNDYAELVSNVENYNESLKESLSYWICKYVVKLSAKLGKIEDEFDLLNILLRNRCNAFYIQGRPRDGSSGESRGCGVYVRNSFFNHSCDPNVNYWVVNNTLEVECTLLKNVKEGDELTISYIDTTSPLNKRREKLLEGYLFNCLCTKCVADESLPLDQTGTLEKDDDDNDDEKEKMDEDDDEKDDDINNKNDKKSKYKSDGSTDDEEDEDNNNNKNNNKNKNNNSNNQDHQNNDKSN.

Residues 1–101 (MDGVIESPSN…KIKKSKKSIK (101 aa)) form a disordered region. Residues 12–55 (TIKISPSTSDSSTTTPIITTPPTQSTATVTTKAAATTTTTEAST) show a composition bias toward low complexity. Pro residues predominate over residues 56–65 (TPPPPQPTPT). Over residues 66 to 90 (PTQSTATVTKEVETTTETIPPIVTK) the composition is skewed to low complexity. A compositionally biased stretch (basic residues) spans 91–101 (GKIKKSKKSIK). The SET domain maps to 122–406 (WPIHVYSHPI…EGDELTISYI (285 aa)). Zn(2+) contacts are provided by Cys167, Cys170, Cys188, Cys191, Cys197, Cys201, His209, and Cys213. The MYND-type zinc finger occupies 167 to 213 (CQHCFLEVPLNQQILPTDFYMCEGCQRVGYCSANCRCIDYSQHRFEC). A disordered region spans residues 442–521 (QTGTLEKDDD…QDHQNNDKSN (80 aa)). The span at 448–469 (KDDDDNDDEKEKMDEDDDEKDD) shows a compositional bias: acidic residues. The span at 470 to 485 (DINNKNDKKSKYKSDG) shows a compositional bias: basic and acidic residues. The segment covering 486–495 (STDDEEDEDN) has biased composition (acidic residues). Low complexity predominate over residues 497–514 (NNKNNNKNKNNNSNNQDH).

This sequence belongs to the class V-like SAM-binding methyltransferase superfamily.

Probable methyltransferase. The sequence is that of SET and MYND domain-containing protein DDB_G0292140 from Dictyostelium discoideum (Social amoeba).